A 393-amino-acid polypeptide reads, in one-letter code: Succinate--CoA ligase [ADP-forming] subunit beta (393 aa).

The 237-residue stretch at K9–Y245 folds into the ATP-grasp domain. Residues K46, G53–G55, E99, I102, and E107 contribute to the ATP site. Residues N200 and D214 each contribute to the Mg(2+) site. Substrate is bound by residues N265 and G322 to V324.

Belongs to the succinate/malate CoA ligase beta subunit family. As to quaternary structure, heterotetramer of two alpha and two beta subunits. Requires Mg(2+) as cofactor.

It catalyses the reaction succinate + ATP + CoA = succinyl-CoA + ADP + phosphate. It carries out the reaction GTP + succinate + CoA = succinyl-CoA + GDP + phosphate. Its pathway is carbohydrate metabolism; tricarboxylic acid cycle; succinate from succinyl-CoA (ligase route): step 1/1. Succinyl-CoA synthetase functions in the citric acid cycle (TCA), coupling the hydrolysis of succinyl-CoA to the synthesis of either ATP or GTP and thus represents the only step of substrate-level phosphorylation in the TCA. The beta subunit provides nucleotide specificity of the enzyme and binds the substrate succinate, while the binding sites for coenzyme A and phosphate are found in the alpha subunit. This is Succinate--CoA ligase [ADP-forming] subunit beta from Baumannia cicadellinicola subsp. Homalodisca coagulata.